A 131-amino-acid chain; its full sequence is D-ribose pyranase (131 aa).

Residue His20 is the Proton donor of the active site. Substrate-binding positions include Asp28, His98, and 120–122 (YAN).

This sequence belongs to the RbsD / FucU family. RbsD subfamily. In terms of assembly, homodecamer.

It localises to the cytoplasm. It catalyses the reaction beta-D-ribopyranose = beta-D-ribofuranose. The protein operates within carbohydrate metabolism; D-ribose degradation; D-ribose 5-phosphate from beta-D-ribopyranose: step 1/2. Functionally, catalyzes the interconversion of beta-pyran and beta-furan forms of D-ribose. In Laribacter hongkongensis (strain HLHK9), this protein is D-ribose pyranase.